The sequence spans 373 residues: Probable jasmonic acid carboxyl methyltransferase 2 (373 aa).

Y18 provides a ligand contact to S-adenosyl-L-homocysteine. Residue Q25 participates in jasmonate binding. S-adenosyl-L-homocysteine is bound by residues C59, N64, D96, L97, S135, and F136. Jasmonate contacts are provided by H156 and W157. The Mg(2+) site is built by N174, D260, F262, and N263.

It belongs to the methyltransferase superfamily. Type-7 methyltransferase family. It depends on Mg(2+) as a cofactor.

The protein resides in the cytoplasm. The protein localises to the nucleus. The catalysed reaction is jasmonate + S-adenosyl-L-methionine = methyl (-)-jasmonate + S-adenosyl-L-homocysteine. Its pathway is lipid metabolism; oxylipin biosynthesis. Catalyzes the methylation of jasmonate into methyljasmonate, a plant volatile that acts as an important cellular regulator mediating diverse developmental processes and defense responses. The chain is Probable jasmonic acid carboxyl methyltransferase 2 from Theobroma cacao (Cacao).